Reading from the N-terminus, the 350-residue chain is Heat-inducible transcription repressor HrcA (350 aa).

Belongs to the HrcA family.

Functionally, negative regulator of class I heat shock genes (grpE-dnaK-dnaJ and groELS operons). Prevents heat-shock induction of these operons. This Methylococcus capsulatus (strain ATCC 33009 / NCIMB 11132 / Bath) protein is Heat-inducible transcription repressor HrcA.